Reading from the N-terminus, the 607-residue chain is UvrABC system protein C (607 aa).

Residues 14–93 (HKPGVYLMLD…IKKHKPRYNI (80 aa)) form the GIY-YIG domain. In terms of domain architecture, UVR spans 203–238 (RDLLAELKRQMLQASERLNFEQAGQFRDQIRALKTT).

Belongs to the UvrC family. In terms of assembly, interacts with UvrB in an incision complex.

The protein localises to the cytoplasm. Its function is as follows. The UvrABC repair system catalyzes the recognition and processing of DNA lesions. UvrC both incises the 5' and 3' sides of the lesion. The N-terminal half is responsible for the 3' incision and the C-terminal half is responsible for the 5' incision. This Desulfotalea psychrophila (strain LSv54 / DSM 12343) protein is UvrABC system protein C.